Here is a 132-residue protein sequence, read N- to C-terminus: Fluoride-specific ion channel FluC (132 aa).

4 helical membrane-spanning segments follow: residues 6–26, 41–61, 73–93, and 104–124; these read VLQLIAVGFGGALGAMARFIV, GTLVVNSLGSFAIGLIMILMI, FLIVGFLGAFTTFSTFSFETY, and AMLNIGVSVLTGLFAVWLGIW. The Na(+) site is built by Gly80 and Thr83.

It belongs to the fluoride channel Fluc/FEX (TC 1.A.43) family.

The protein localises to the cell inner membrane. The catalysed reaction is fluoride(in) = fluoride(out). Na(+) is not transported, but it plays an essential structural role and its presence is essential for fluoride channel function. Its function is as follows. Fluoride-specific ion channel. Important for reducing fluoride concentration in the cell, thus reducing its toxicity. This Hydrogenovibrio crunogenus (strain DSM 25203 / XCL-2) (Thiomicrospira crunogena) protein is Fluoride-specific ion channel FluC.